The following is a 392-amino-acid chain: Casein kinase II subunit alpha (392 aa).

In terms of domain architecture, Protein kinase spans 39–324 (YQLVRKLGRG…AREAMDHPYF (286 aa)). ATP-binding positions include 45–53 (LGRGKYSEV) and lysine 68. The active-site Proton acceptor is the aspartate 156. Positions 334–355 (MGGSNMPSGSSTPVSSASMMSG) are disordered. Over residues 337-354 (SNMPSGSSTPVSSASMMS) the composition is skewed to low complexity.

It belongs to the protein kinase superfamily. Ser/Thr protein kinase family. CK2 subfamily. In terms of assembly, tetramer composed of an alpha chain, an alpha' and two beta chains.

The protein localises to the nucleus. It catalyses the reaction L-seryl-[protein] + ATP = O-phospho-L-seryl-[protein] + ADP + H(+). The enzyme catalyses L-threonyl-[protein] + ATP = O-phospho-L-threonyl-[protein] + ADP + H(+). Catalytic subunit of a constitutively active serine/threonine-protein kinase complex that phosphorylates a large number of substrates containing acidic residues C-terminal to the phosphorylated serine or threonine. Regulates numerous cellular processes, such as cell cycle progression, apoptosis and transcription, as well as viral infection. May act as a regulatory node which integrates and coordinates numerous signals leading to an appropriate cellular response. During mitosis, functions as a component of the p53/TP53-dependent spindle assembly checkpoint (SAC) that maintains cyclin-B-CDK1 activity and G2 arrest in response to spindle damage. Can also negatively regulate apoptosis. Phosphorylates the caspases CASP9 and CASP2 and the apoptotic regulator NOL3. Phosphorylation protects CASP9 from cleavage and activation by CASP8, and inhibits the dimerization of CASP2 and activation of CASP8. Plays an important role in the circadian clock function by phosphorylating BMAL1. This chain is Casein kinase II subunit alpha (csnk2a1), found in Xenopus laevis (African clawed frog).